The following is a 680-amino-acid chain: Galactose oxidase (680 aa).

The first 24 residues, 1–24 (MKHLLTLALCFSSINAVAVTVPHK), serve as a signal peptide directing secretion. Positions 25-41 (AVGTGIPEGSLQFLSLR) are excised as a propeptide. The F5/8 type C domain maps to 42–189 (ASAPIGSAIS…SIAEINVFQA (148 aa)). Cys-59 and Cys-68 are disulfide-bonded. Kelch repeat units lie at residues 223–268 (RVLM…HDMF), 279–321 (QIVV…TMSD), 323–372 (RVFT…LYRS), 436–490 (KILT…VLPD), and 492–544 (STFI…LLLP). The 3'-(S-cysteinyl)-tyrosine (Cys-Tyr) cross-link spans 269–313 (CPGISMDGNGQIVVTGGNDAKKTSLYDSSSDSWIPGPDMQVARGY). Tyr-313 provides a ligand contact to Cu cation. Cu cation contacts are provided by Tyr-536 and His-537. Catalysis depends on Tyr-536, which acts as the Proton acceptor. Cys-556 and Cys-559 are joined by a disulfide. Residue His-622 participates in Cu cation binding.

As to quaternary structure, monomer. It depends on Cu(2+) as a cofactor. Post-translationally, galactose oxidase contains a protein-derived free radical cofactor. In the active state, Tyr-313, which is cross-linked to Cys-269 via a thioether bond, is oxidized to a radical and acts with Cu(2+) as a two-electron acceptor in the oxidation reaction. The cross-link is believed to modulate the redox potential of the tyrosyl radical, which is further stabilized by a stacking interaction with Trp-331 in the active site. The post-translational formation of the cross-link is closely linked to the propeptide cleavage event, and both are copper-dependent, autocatalytic processes. The propeptide may act as an intramolecular chaperone, facilitating thioester bond formation and copper binding by positioning of active-site residues, including copper ligands.

It localises to the secreted. It carries out the reaction D-galactose + O2 = D-galacto-hexodialdose + H2O2. Inhibited by diethyldithiocarbamate. In terms of biological role, catalyzes the sterospecific oxidation of primary alcohols to the corresponding aldehydes. The biologically relevant substrate of the enzyme is not known as the enzyme exhibits broad substrate specificity from small alcohols through sugars to oligo- and polysaccharides. The protein is Galactose oxidase (GAOA) of Gibberella zeae (Wheat head blight fungus).